The following is a 669-amino-acid chain: DNA mismatch repair protein MutL (669 aa).

The tract at residues 356–382 is disordered; it reads FEQRQNTENNQEKTFSSEESNSKPFME. A compositionally biased stretch (polar residues) spans 361-378; that stretch reads NTENNQEKTFSSEESNSK.

It belongs to the DNA mismatch repair MutL/HexB family.

Its function is as follows. This protein is involved in the repair of mismatches in DNA. It is required for dam-dependent methyl-directed DNA mismatch repair. May act as a 'molecular matchmaker', a protein that promotes the formation of a stable complex between two or more DNA-binding proteins in an ATP-dependent manner without itself being part of a final effector complex. In Staphylococcus aureus (strain USA300), this protein is DNA mismatch repair protein MutL.